We begin with the raw amino-acid sequence, 192 residues long: Xanthine phosphoribosyltransferase (192 aa).

Residues Leu20 and Asn27 each coordinate xanthine. 128–132 (ANGDA) contacts 5-phospho-alpha-D-ribose 1-diphosphate. Residue Lys156 participates in xanthine binding.

The protein belongs to the purine/pyrimidine phosphoribosyltransferase family. Xpt subfamily. As to quaternary structure, homodimer.

It localises to the cytoplasm. The catalysed reaction is XMP + diphosphate = xanthine + 5-phospho-alpha-D-ribose 1-diphosphate. Its pathway is purine metabolism; XMP biosynthesis via salvage pathway; XMP from xanthine: step 1/1. Its function is as follows. Converts the preformed base xanthine, a product of nucleic acid breakdown, to xanthosine 5'-monophosphate (XMP), so it can be reused for RNA or DNA synthesis. The chain is Xanthine phosphoribosyltransferase from Staphylococcus aureus (strain Mu3 / ATCC 700698).